Consider the following 1291-residue polypeptide: Vigilin 1 (1291 aa).

A compositionally biased stretch (polar residues) spans 1–39 (MEHLSNLEQPTTMDSYDFQKLTNDENLQGTESQVPSGSK). Disordered stretches follow at residues 1–45 (MEHL…STNG) and 70–91 (HENAQQGKKQNNSKSFSKKPAI). A compositionally biased stretch (low complexity) spans 73–88 (AQQGKKQNNSKSFSKK). The residue at position 115 (serine 115) is a Phosphoserine. Residues 124 to 148 (TSVAGSDSVSRDKIPFSASSRASST) are disordered. KH domains lie at 166 to 229 (ILSP…RRQI), 236 to 328 (RETK…QKDI), 339 to 405 (TTVR…ALYL), 416 to 486 (TIPT…NSTI), 575 to 644 (SKFY…LADL), 658 to 726 (IVSE…VSEI), 741 to 798 (SHVE…AARI), 808 to 883 (DTIL…KQEL), 894 to 957 (AYTS…IKEI), 967 to 1040 (LVEK…ETRL), 1050 to 1114 (QVEE…KEMI), and 1219 to 1280 (NCIA…KDLI). Residues 266 to 303 (TSTRIQIPKRNNTANESSDDAKKPEKEENSAASTLDDL) form a disordered region. The segment covering 268-281 (TRIQIPKRNNTANE) has biased composition (polar residues). Positions 284–294 (DDAKKPEKEEN) are enriched in basic and acidic residues. The segment at 845–865 (PREDDSSNSTGNELMKPTSPD) is disordered. Serine 934 is modified (phosphoserine). Threonine 935 bears the Phosphothreonine mark.

The protein resides in the endoplasmic reticulum. It is found in the cytoplasm. Functionally, required for cell survival under thermal stress. This is Vigilin 1 (vgl1) from Schizosaccharomyces pombe (strain 972 / ATCC 24843) (Fission yeast).